Here is a 145-residue protein sequence, read N- to C-terminus: Secreted RxLR effector protein PSE1 (145 aa).

The signal sequence occupies residues 1–21 (MRLSSFIVVGAAVVNLLTSGS). Residues 53–73 (RLLRYHSNNNRGGDEDIAEER) carry the RxLR-dEER motif.

Belongs to the RxLR effector family.

Its subcellular location is the secreted. The protein resides in the host cell. Functionally, secreted effector that impairs both plant effector-triggered immunity and pathogen-associated molecular patterns (PAMP)-triggered immunity (PTI). Suppresses plant cell death as a part of the plant defense responses. Facilitates plant infection by altering the auxin content at the roots penetration points of the of the pathogen. This chain is Secreted RxLR effector protein PSE1, found in Phytophthora nicotianae (Potato buckeye rot agent).